The primary structure comprises 115 residues: Somatostatin-2 (115 aa).

The N-terminal stretch at 1–18 is a signal peptide; it reads MKVCRIHCALALLGLALA. A propeptide spanning residues 19 to 87 is cleaved from the precursor; sequence ICSQGAASQP…KEDLRVELER (69 aa). Cys104 and Cys115 are joined by a disulfide.

The protein belongs to the somatostatin family.

The protein resides in the secreted. Its function is as follows. Somatostatin inhibits the release of somatotropin. In Oncorhynchus mykiss (Rainbow trout), this protein is Somatostatin-2 (sst2).